Consider the following 258-residue polypeptide: Imidazole glycerol phosphate synthase subunit HisF (258 aa).

Catalysis depends on residues Asp-11 and Asp-130.

The protein belongs to the HisA/HisF family. As to quaternary structure, heterodimer of HisH and HisF.

The protein resides in the cytoplasm. The enzyme catalyses 5-[(5-phospho-1-deoxy-D-ribulos-1-ylimino)methylamino]-1-(5-phospho-beta-D-ribosyl)imidazole-4-carboxamide + L-glutamine = D-erythro-1-(imidazol-4-yl)glycerol 3-phosphate + 5-amino-1-(5-phospho-beta-D-ribosyl)imidazole-4-carboxamide + L-glutamate + H(+). Its pathway is amino-acid biosynthesis; L-histidine biosynthesis; L-histidine from 5-phospho-alpha-D-ribose 1-diphosphate: step 5/9. Functionally, IGPS catalyzes the conversion of PRFAR and glutamine to IGP, AICAR and glutamate. The HisF subunit catalyzes the cyclization activity that produces IGP and AICAR from PRFAR using the ammonia provided by the HisH subunit. In Methylorubrum extorquens (strain PA1) (Methylobacterium extorquens), this protein is Imidazole glycerol phosphate synthase subunit HisF.